The following is a 134-amino-acid chain: Protein LctB (134 aa).

The chain is Protein LctB (lctB) from Geobacillus stearothermophilus (Bacillus stearothermophilus).